The primary structure comprises 137 residues: ATP synthase epsilon chain (137 aa).

This sequence belongs to the ATPase epsilon chain family. As to quaternary structure, F-type ATPases have 2 components, CF(1) - the catalytic core - and CF(0) - the membrane proton channel. CF(1) has five subunits: alpha(3), beta(3), gamma(1), delta(1), epsilon(1). CF(0) has three main subunits: a, b and c.

The protein resides in the cell membrane. Produces ATP from ADP in the presence of a proton gradient across the membrane. The sequence is that of ATP synthase epsilon chain from Caldicellulosiruptor saccharolyticus (strain ATCC 43494 / DSM 8903 / Tp8T 6331).